Here is a 240-residue protein sequence, read N- to C-terminus: Ribosomal RNA small subunit methyltransferase G (240 aa).

S-adenosyl-L-methionine is bound by residues G79, F84, 130 to 131 (AE), and R149.

It belongs to the methyltransferase superfamily. RNA methyltransferase RsmG family.

Its subcellular location is the cytoplasm. Its function is as follows. Specifically methylates the N7 position of a guanine in 16S rRNA. The sequence is that of Ribosomal RNA small subunit methyltransferase G from Desulforamulus reducens (strain ATCC BAA-1160 / DSM 100696 / MI-1) (Desulfotomaculum reducens).